Reading from the N-terminus, the 203-residue chain is Large ribosomal subunit protein bL25 (203 aa).

The protein belongs to the bacterial ribosomal protein bL25 family. CTC subfamily. Part of the 50S ribosomal subunit; part of the 5S rRNA/L5/L18/L25 subcomplex. Contacts the 5S rRNA. Binds to the 5S rRNA independently of L5 and L18.

This is one of the proteins that binds to the 5S RNA in the ribosome where it forms part of the central protuberance. This chain is Large ribosomal subunit protein bL25, found in Psychromonas ingrahamii (strain DSM 17664 / CCUG 51855 / 37).